A 355-amino-acid polypeptide reads, in one-letter code: NADH dehydrogenase [ubiquinone] 1 alpha subcomplex subunit 10, mitochondrial (355 aa).

The transit peptide at 1–35 (MALRLLRLVPASAPARGLAAGAQRVGRIHTSVHCK) directs the protein to the mitochondrion. Residue Lys122 is modified to N6-acetyllysine; alternate. At Lys122 the chain carries N6-succinyllysine; alternate. Ser250 carries the post-translational modification Phosphoserine; by PINK1. The residue at position 285 (Lys285) is an N6-succinyllysine.

Belongs to the complex I NDUFA10 subunit family. As to quaternary structure, complex I is composed of 45 different subunits. This a component of the hydrophobic protein fraction. FAD is required as a cofactor. In terms of processing, phosphorylation at Ser-250 by PINK1 is required for the binding and/or reduction of the complex I substrate ubiquinone. Post-translationally, acetylation of Lys-242 is observed in liver mitochondria from fasted mice but not from fed mice.

The protein localises to the mitochondrion matrix. Its function is as follows. Accessory subunit of the mitochondrial membrane respiratory chain NADH dehydrogenase (Complex I), that is believed not to be involved in catalysis. Complex I functions in the transfer of electrons from NADH to the respiratory chain. The immediate electron acceptor for the enzyme is believed to be ubiquinone. In Mus musculus (Mouse), this protein is NADH dehydrogenase [ubiquinone] 1 alpha subcomplex subunit 10, mitochondrial (Ndufa10).